Here is a 1063-residue protein sequence, read N- to C-terminus: MFEDEPHAEGAAAVAAAREALQALCQELNLDEGSAAEALDDFTAIRGNYSLEGEVIHWLACSLYVACRKSIIPTVGKGVMEGNCVSLTRILRSAKLSLIQFFSKMKKWMDMSNLPQEFRERIERLERNFEVSTVIFKKFEPIFLDIFQNPYEEPPKLPRSRKQRRIPCSVKDLFNFCWTLFVYTKGNFRMIGDDLVNSYHLLLCCLDLIFANAIMCPNRRDLLNPSFKGLPSDFHAPDFKAAEEPPCIIAVLCDLHDGLLVEAKGIKEHYFKPYISKLFDKKILKGECLLDLSSFTDNSKAVNKEYEEYVLTVGDFDERIFLGADAEEEIGTPRKFTADTPFGKLTSQASVECNLQQHFEKKRSFAPSTPLTGRRYLQEKEAVTTPVASATQSVSRLQSIVAGLKSAPSEQLLNIFESCMRNPMGNIIKIVKGIGETFCQHYTQSTDKQPGSHIDFAVNRLKLAEILYYKILETIMVQETRRLHGMDMSVLLEQDIFHKSLMACCLEIVLFAYSSPRTFPWIIEVLDLQPFYFYKVIEVVIRSEEGLSRDMVKHLNSIEEQILESLAWTNNSALWEALHASANRVPSCEEVIFPNNFEIGNGGNVQGHLPMMPMSPIIHPRVKEVRTDSGSLRQDMQPLSPISVHERYSSPAAGSAKRRLFGDDPPKDTLMDKIMAEGTKLKIAPSSVTAESLSISPGQALLTMATTTVTGTTGRKVTVPLHGIANDAGEITLVPISMNPTQESTAESPVSLTAQSLIGTSPKQTHLTKAQDAHLTGVSKPKRTGSLALFYRKVYHLASVRLRDLCLKLDVSNELRRKIWTCFEFTLVHCPDLMKDRHLDQLLLCAFYIMAKVTKEERTFQEIMKSYRNQPQANSHVYRSVLLKSIPGGVVVYNGDCEMTDGDIEDATKTPNCSSEPVKEERGDLIKFYNTVYVGRVKSFALKYDLSNQDHIMDAPPLSPFPHIKQQPGSPRRISQQHSLYVSPHKNGAGLTPRSALLYKFNGSPSKSLKDINNMIRQGEQKTKKRVIAISGDADSPAKRLCQENDDVLLKRLQDVVSERANH.

3 positions are modified to phosphothreonine: Thr-332, Thr-369, and Thr-385. The interval 383 to 584 (VTTPVASATQ…WEALHASANR (202 aa)) is domain A. Positions 383-944 (VTTPVASATQ…GRVKSFALKY (562 aa)) are pocket; binds T and E1A. The tract at residues 585–779 (VPSCEEVIFP…AQDAHLTGVS (195 aa)) is spacer. Phosphoserine is present on residues Ser-640, Ser-650, Ser-748, and Ser-761. The domain B stretch occupies residues 780–944 (KPKRTGSLAL…GRVKSFALKY (165 aa)). 3 positions are modified to phosphoserine: Ser-959, Ser-970, and Ser-983. The residue at position 992 (Thr-992) is a Phosphothreonine. Ser-1004 and Ser-1036 each carry phosphoserine.

It belongs to the retinoblastoma protein (RB) family. In terms of assembly, component of the DREAM complex (also named LINC complex) at least composed of E2F4, E2F5, LIN9, LIN37, LIN52, LIN54, MYBL1, MYBL2, RBL1, RBL2, RBBP4, TFDP1 and TFDP2. The complex exists in quiescent cells where it represses cell cycle-dependent genes. It dissociates in S phase when LIN9, LIN37, LIN52 and LIN54 form a subcomplex that binds to MYBL2. Interacts with AATF. Interacts with KDM5A. Interacts with KMT5B and KMT5C. Interacts with USP4. Interacts with RBBP9. In terms of processing, cell-cycle arrest properties are inactivated by phosphorylation on Thr-332, Ser-640, Ser-959 and Ser-970 by CDK4. In terms of tissue distribution, highly expressed in fetal heart and liver. Expressed at low levels in all other fetal tissues except skeletal muscle. High levels in neonatal spleen and thymus with low levels in other tissues. In adult, highly expressed in testis. Barely detectable in other tissues.

The protein localises to the nucleus. Its function is as follows. Key regulator of entry into cell division. Directly involved in heterochromatin formation by maintaining overall chromatin structure and, in particular, that of constitutive heterochromatin by stabilizing histone methylation. Recruits and targets histone methyltransferases KMT5B and KMT5C, leading to epigenetic transcriptional repression. Controls histone H4 'Lys-20' trimethylation. Probably acts as a transcription repressor by recruiting chromatin-modifying enzymes to promoters. Potent inhibitor of E2F-mediated trans-activation. May act as a tumor suppressor. This is Retinoblastoma-like protein 1 (Rbl1) from Mus musculus (Mouse).